A 117-amino-acid chain; its full sequence is Carboxysome shell protein CcmK4 (117 aa).

The region spanning 5-91 (AVGSLETKGF…PHENVECVLP (87 aa)) is the BMC domain.

Belongs to the bacterial microcompartments protein family. CcmK subfamily. In terms of assembly, crystallizes as a homohexamer. Interacts stably with CcmK3, forming heterohexamers that can make dodecamers. Heterohexamers have a 1:2 CcmK3:CcmK4 stoichiometry. Upon expression in E.coli forms large aggregates.

The protein resides in the carboxysome. Functionally, a probably essential, minor shell protein of the carboxysome, a polyhedral inclusion where RuBisCO (ribulose bisphosphate carboxylase, rbcL-rbcS) is sequestered. Hexamers form sheets that form the facets of the polyhedral carboxysome. In PCC 7418 there are several CcmK paralogs with presumably functional differences. This subunit can probably make both homohexamers and heterohexamers with CcmK3. Both hexamers can also make dodecamers, formation depends on buffer conditions. This chain is Carboxysome shell protein CcmK4, found in Halothece sp. (strain PCC 7418) (Synechococcus sp. (strain PCC 7418)).